We begin with the raw amino-acid sequence, 391 residues long: Phosphoglycerate kinase (391 aa).

Residues 21 to 23 (DLN), Arg36, 59 to 62 (HLGR), Arg113, and Arg146 contribute to the substrate site. ATP contacts are provided by residues Lys197, Glu319, and 345 to 348 (GGDT).

The protein belongs to the phosphoglycerate kinase family. Monomer.

It is found in the cytoplasm. It catalyses the reaction (2R)-3-phosphoglycerate + ATP = (2R)-3-phospho-glyceroyl phosphate + ADP. It participates in carbohydrate degradation; glycolysis; pyruvate from D-glyceraldehyde 3-phosphate: step 2/5. The polypeptide is Phosphoglycerate kinase (Stenotrophomonas maltophilia (strain R551-3)).